Here is a 601-residue protein sequence, read N- to C-terminus: DNA ligase (601 aa).

ATP is bound at residue aspartate 258. Catalysis depends on lysine 260, which acts as the N6-AMP-lysine intermediate. 6 residues coordinate ATP: arginine 265, arginine 280, glutamate 310, phenylalanine 350, arginine 427, and lysine 433.

The protein belongs to the ATP-dependent DNA ligase family. Interacts with the PCNA heterotrimer, probably via subunit PCNA3. It depends on a divalent metal cation as a cofactor.

The enzyme catalyses ATP + (deoxyribonucleotide)n-3'-hydroxyl + 5'-phospho-(deoxyribonucleotide)m = (deoxyribonucleotide)n+m + AMP + diphosphate.. Its activity is regulated as follows. Ligase activity stimulated by PCNA heterotrimer. In terms of biological role, DNA ligase that seals nicks in double-stranded DNA during DNA replication, DNA recombination and DNA repair. Interaction with PCNA enhances ligase activity. DNA polymerase I, DNA ligase and the flap endonuclease may be constitutively associated with the PCNA heterotrimer forming a scanning complex able to couple DNA synthesis and Okazaki fragment maturation. The protein is DNA ligase of Saccharolobus solfataricus (strain ATCC 35092 / DSM 1617 / JCM 11322 / P2) (Sulfolobus solfataricus).